The sequence spans 79 residues: Acyl carrier protein (79 aa).

A Carrier domain is found at 3-78 (QEILEKVCSI…DAVKFIEEKK (76 aa)). The residue at position 38 (Ser-38) is an O-(pantetheine 4'-phosphoryl)serine.

It belongs to the acyl carrier protein (ACP) family. 4'-phosphopantetheine is transferred from CoA to a specific serine of apo-ACP by AcpS. This modification is essential for activity because fatty acids are bound in thioester linkage to the sulfhydryl of the prosthetic group.

Its subcellular location is the cytoplasm. Its pathway is lipid metabolism; fatty acid biosynthesis. Carrier of the growing fatty acid chain in fatty acid biosynthesis. In Prochlorococcus marinus (strain MIT 9312), this protein is Acyl carrier protein.